Reading from the N-terminus, the 353-residue chain is Uroporphyrinogen decarboxylase (353 aa).

Substrate contacts are provided by residues 26-30 (RQAGR), aspartate 76, tyrosine 153, threonine 208, and histidine 326.

This sequence belongs to the uroporphyrinogen decarboxylase family. As to quaternary structure, homodimer.

The protein localises to the cytoplasm. It catalyses the reaction uroporphyrinogen III + 4 H(+) = coproporphyrinogen III + 4 CO2. Its pathway is porphyrin-containing compound metabolism; protoporphyrin-IX biosynthesis; coproporphyrinogen-III from 5-aminolevulinate: step 4/4. Functionally, catalyzes the decarboxylation of four acetate groups of uroporphyrinogen-III to yield coproporphyrinogen-III. In Chromohalobacter salexigens (strain ATCC BAA-138 / DSM 3043 / CIP 106854 / NCIMB 13768 / 1H11), this protein is Uroporphyrinogen decarboxylase.